The primary structure comprises 196 residues: Thymidine kinase (196 aa).

An ATP-binding site is contributed by 17–24 (GPMFAGKT). E92 functions as the Proton acceptor in the catalytic mechanism. F121 is a binding site for substrate. Zn(2+) contacts are provided by C146 and C149. 166–170 (LILAG) contacts substrate. Zn(2+)-binding residues include C179 and C182.

Belongs to the thymidine kinase family.

The enzyme catalyses thymidine + ATP = dTMP + ADP + H(+). Its function is as follows. Phosphorylates thymidine. ASFV replicates in the cytoplasm of infected cells and contains genes encoding a number of enzymes needed for DNA synthesis, including thymidine kinase. Important for growth in swine macrophages in vitro and is a virus virulence factor in swine. In African swine fever virus (strain Badajoz 1971 Vero-adapted) (Ba71V), this protein is Thymidine kinase.